Reading from the N-terminus, the 448-residue chain is Deoxyguanosinetriphosphate triphosphohydrolase-like protein (448 aa).

Positions 1–26 are disordered; the sequence is MQINSSWQERFLADPPREKDHRPPFR. Over residues 11–26 the composition is skewed to basic and acidic residues; that stretch reads FLADPPREKDHRPPFR. The 214-residue stretch at 59-272 folds into the HD domain; that stretch reads RLTHSLEVAQ…MELADDIAYA (214 aa).

It belongs to the dGTPase family. Type 2 subfamily.

The polypeptide is Deoxyguanosinetriphosphate triphosphohydrolase-like protein (Histophilus somni (strain 129Pt) (Haemophilus somnus)).